Here is a 230-residue protein sequence, read N- to C-terminus: Cytidylate kinase (230 aa).

An ATP-binding site is contributed by 12-20 (GPSGTGKST).

The protein belongs to the cytidylate kinase family. Type 1 subfamily.

Its subcellular location is the cytoplasm. The catalysed reaction is CMP + ATP = CDP + ADP. It carries out the reaction dCMP + ATP = dCDP + ADP. The protein is Cytidylate kinase of Corynebacterium glutamicum (strain ATCC 13032 / DSM 20300 / JCM 1318 / BCRC 11384 / CCUG 27702 / LMG 3730 / NBRC 12168 / NCIMB 10025 / NRRL B-2784 / 534).